Here is a 203-residue protein sequence, read N- to C-terminus: Outer-membrane lipoprotein carrier protein (203 aa).

An N-terminal signal peptide occupies residues 1–21 (MKKLAITCALLSGMVVSQVWA). Positions 184–203 (DASKFTFTPPKGVTVDDQRK) are disordered.

The protein belongs to the LolA family. Monomer.

The protein localises to the periplasm. Functionally, participates in the translocation of lipoproteins from the inner membrane to the outer membrane. Only forms a complex with a lipoprotein if the residue after the N-terminal Cys is not an aspartate (The Asp acts as a targeting signal to indicate that the lipoprotein should stay in the inner membrane). The polypeptide is Outer-membrane lipoprotein carrier protein (Klebsiella pneumoniae (strain 342)).